The primary structure comprises 152 residues: Orientotoxin-1 (152 aa).

As to expression, expressed by the venom gland.

Its subcellular location is the secreted. It carries out the reaction a 1-acyl-sn-glycero-3-phosphocholine + H2O = sn-glycerol 3-phosphocholine + a fatty acid + H(+). Functionally, neurotoxin of presynaptic effect which degrades lysophospholipids. The sequence is that of Orientotoxin-1 from Vespa orientalis (Oriental hornet).